The sequence spans 739 residues: Catalase-peroxidase 2 (739 aa).

Residues 1-26 (MKKSTIPSMSALTLAMSLAFGGAAIA) form the signal peptide. The tryptophyl-tyrosyl-methioninium (Trp-Tyr) (with M-253) cross-link spans 105–227 (WHSAGVYRIF…MGATQMGLIY (123 aa)). The active-site Proton acceptor is His-106. A cross-link (tryptophyl-tyrosyl-methioninium (Tyr-Met) (with W-105)) is located at residues 227–253 (YVNPEGPNGVPDPLASAKEIRDTFGRM). His-268 lines the heme b pocket.

It belongs to the peroxidase family. Peroxidase/catalase subfamily. As to quaternary structure, homodimer or homotetramer. Heme b is required as a cofactor. Formation of the three residue Trp-Tyr-Met cross-link is important for the catalase, but not the peroxidase activity of the enzyme.

It carries out the reaction H2O2 + AH2 = A + 2 H2O. The catalysed reaction is 2 H2O2 = O2 + 2 H2O. Its function is as follows. Bifunctional enzyme with both catalase and broad-spectrum peroxidase activity. The sequence is that of Catalase-peroxidase 2 from Shewanella sp. (strain ANA-3).